A 614-amino-acid chain; its full sequence is Fructokinase-like 2, chloroplastic (614 aa).

Residues 1-44 (MASLSFTQFLSFPRCNADVPCLLQSHGFVKFRGERWNGKQSFSM) constitute a chloroplast transit peptide. Disordered regions lie at residues 47-75 (GRRK…KPSK) and 542-592 (GYPP…YVMK). Residues 548-563 (DMEEEEDDEEEDEVES) are compositionally biased toward acidic residues. The segment covering 571–583 (ITEKEYRTSKPYD) has biased composition (basic and acidic residues).

It belongs to the carbohydrate kinase PfkB family. Interacts with CITRX/TRXz. Binds to FLN1 and PTAC5. Associates with the plastid-encoded RNA polymerase (PEP) complex.

The protein resides in the plastid. The protein localises to the chloroplast. Required for proper chloroplast development, most likely through regulating plastid-encoded polymerase (PEP) dependent chloroplast transcription. Acts as a component of the transcriptionally active plastid chromosome that is required for plastid gene expression. The chain is Fructokinase-like 2, chloroplastic from Arabidopsis thaliana (Mouse-ear cress).